Here is a 1286-residue protein sequence, read N- to C-terminus: CLIP-associating protein 2 (1286 aa).

The golgi localization stretch occupies residues 1–40 (MRRLICKRICDYKSFDDEESVDGNRPSSAASAFKVPAPKT). Ser14 and Ser20 each carry phosphoserine. The disordered stretch occupies residues 17–70 (DEESVDGNRPSSAASAFKVPAPKTPGNPVNSARKPGSAGGPKAGGTSKEGGAGA). Residues 53–69 (SAGGPKAGGTSKEGGAG) are compositionally biased toward gly residues. The segment at 66–317 (GGAGAVDEDD…KSLQTYLKSS (252 aa)) is TOG 1. HEAT repeat units lie at residues 179 to 214 (HGAE…IRHT), 215 to 251 (HVPR…EWQT), and 256 to 293 (RHAA…HFPG). Disordered stretches follow at residues 320–350 (VASL…TANP) and 355–374 (GRVS…LQRS). Phosphoserine is present on residues Ser322, Ser333, and Ser336. The span at 322-340 (SLPQSDRSSSSSQESLNRP) shows a compositional bias: low complexity. Residues 341-350 (FSSKWSTANP) are compositionally biased toward polar residues. Phosphoserine occurs at positions 374, 376, and 413. Residues 410–473 (SYASLEDTSD…GSRSGSPGRV (64 aa)) are disordered. The segment covering 417–431 (TSDKMDGTASEDGRV) has biased composition (basic and acidic residues). The interaction with microtubules, MAPRE1 and MAPRE3 stretch occupies residues 450–565 (RGRSRTKMVS…GPGYGMSQSS (116 aa)). A compositionally biased stretch (low complexity) spans 459–473 (SQSQPGSRSGSPGRV). Ser461, Ser465, Ser469, Ser484, and Ser495 each carry phosphoserine. Residues 492-566 (NSASAQKRSK…PGYGMSQSSR (75 aa)) are disordered. An SXIP motif 1; mediates interaction with MAPRE1 and targeting to microtubule plus ends motif is present at residues 500–503 (SKIP). Residue Ser513 is modified to Phosphoserine. An SXIP motif 2; mediates interaction with MAPRE1 and targeting to microtubule plus ends motif is present at residues 523–526 (SRIP). Residues Ser531, Ser535, Ser570, Ser572, Ser581, Ser614, and Ser620 each carry the phosphoserine modification. Residues 606 to 616 (RYESYGMHSDD) show a composition bias toward basic and acidic residues. The interval 606–638 (RYESYGMHSDDDANSDASSACSERSYSSRNGSI) is disordered. A compositionally biased stretch (low complexity) spans 620–634 (SDASSACSERSYSSR). The interval 642-873 (MRQTEDVAEV…TKLLHNHLRN (232 aa)) is TOG 2. 2 HEAT repeats span residues 702-739 (KVFS…KMGA) and 764-801 (LQFN…QMDP). At Thr779 the chain carries Phosphothreonine. Positions 864 to 1286 (TKLLHNHLRN…DPTTDVSGQS (423 aa)) are interaction with RSN and localization to the Golgi and kinetochores. 2 disordered regions span residues 870–920 (HLRN…FDYD) and 944–990 (SFRS…QPAL). Composition is skewed to polar residues over residues 872-884 (RNTG…SMGS) and 893-914 (SPAN…TLSP). Ser884 bears the Phosphoserine mark. Phosphoserine is present on residues Ser944, Ser947, Ser1005, and Ser1021. Residues 947–964 (SQEDMSEPLKRDPKKEDG) are compositionally biased toward basic and acidic residues. Residues 1009-1286 (RDYNPYNYSD…DPTTDVSGQS (278 aa)) form a required for cortical localization region. HEAT repeat units lie at residues 1046–1083 (LDHS…TQEE), 1090–1127 (EHFK…HQPA), and 1208–1245 (LLLP…VIGD).

Belongs to the CLASP family. Interacts with microtubules. Interacts with MAPRE1; probably required for targeting to the growing microtubule plus ends. Interacts with CLIP2, ERC1, MAPRE3, PHLDB2 and RSN. The interaction with ERC1 may be mediated by PHLDB2. Interacts with GCC2; recruits CLASP2 to Golgi membranes. Interacts with MACF1. Interacts with SOGA1 and MTCL1. Post-translationally, phosphorylated by GSK3B. Phosphorylation by GSK3B may negatively regulate binding to microtubule lattices in lamella.

It is found in the cytoplasm. Its subcellular location is the cytoskeleton. The protein localises to the microtubule organizing center. The protein resides in the centrosome. It localises to the chromosome. It is found in the centromere. Its subcellular location is the kinetochore. The protein localises to the spindle. The protein resides in the golgi apparatus. It localises to the trans-Golgi network. It is found in the cell membrane. Its subcellular location is the cell projection. The protein localises to the ruffle membrane. The protein resides in the cell cortex. Microtubule plus-end tracking protein that promotes the stabilization of dynamic microtubules. Involved in the nucleation of noncentrosomal microtubules originating from the trans-Golgi network (TGN). Required for the polarization of the cytoplasmic microtubule arrays in migrating cells towards the leading edge of the cell. May act at the cell cortex to enhance the frequency of rescue of depolymerizing microtubules by attaching their plus-ends to cortical platforms composed of ERC1 and PHLDB2. This cortical microtubule stabilizing activity is regulated at least in part by phosphatidylinositol 3-kinase signaling. Also performs a similar stabilizing function at the kinetochore which is essential for the bipolar alignment of chromosomes on the mitotic spindle. Acts as a mediator of ERBB2-dependent stabilization of microtubules at the cell cortex. The chain is CLIP-associating protein 2 (Clasp2) from Rattus norvegicus (Rat).